The sequence spans 174 residues: Large ribosomal subunit protein uL10 (174 aa).

It belongs to the universal ribosomal protein uL10 family. Part of the ribosomal stalk of the 50S ribosomal subunit. The N-terminus interacts with L11 and the large rRNA to form the base of the stalk. The C-terminus forms an elongated spine to which L12 dimers bind in a sequential fashion forming a multimeric L10(L12)X complex.

In terms of biological role, forms part of the ribosomal stalk, playing a central role in the interaction of the ribosome with GTP-bound translation factors. This Syntrophus aciditrophicus (strain SB) protein is Large ribosomal subunit protein uL10.